A 372-amino-acid chain; its full sequence is Glutamate 5-kinase (372 aa).

Lys-14 contacts ATP. Residues Ser-54, Asp-141, and Asn-153 each contribute to the substrate site. 173 to 174 (TD) contacts ATP. The 79-residue stretch at 280-358 (AGRIVLDQGA…TDILSILGFV (79 aa)) folds into the PUA domain.

This sequence belongs to the glutamate 5-kinase family.

It is found in the cytoplasm. The catalysed reaction is L-glutamate + ATP = L-glutamyl 5-phosphate + ADP. The protein operates within amino-acid biosynthesis; L-proline biosynthesis; L-glutamate 5-semialdehyde from L-glutamate: step 1/2. In terms of biological role, catalyzes the transfer of a phosphate group to glutamate to form L-glutamate 5-phosphate. This chain is Glutamate 5-kinase, found in Herminiimonas arsenicoxydans.